A 90-amino-acid polypeptide reads, in one-letter code: UPF0335 protein bsl7135 (90 aa).

Belongs to the UPF0335 family.

In Bradyrhizobium diazoefficiens (strain JCM 10833 / BCRC 13528 / IAM 13628 / NBRC 14792 / USDA 110), this protein is UPF0335 protein bsl7135.